The sequence spans 341 residues: S-adenosylmethionine:tRNA ribosyltransferase-isomerase (341 aa).

The protein belongs to the QueA family. Monomer.

The protein localises to the cytoplasm. The catalysed reaction is 7-aminomethyl-7-carbaguanosine(34) in tRNA + S-adenosyl-L-methionine = epoxyqueuosine(34) in tRNA + adenine + L-methionine + 2 H(+). It functions in the pathway tRNA modification; tRNA-queuosine biosynthesis. In terms of biological role, transfers and isomerizes the ribose moiety from AdoMet to the 7-aminomethyl group of 7-deazaguanine (preQ1-tRNA) to give epoxyqueuosine (oQ-tRNA). This chain is S-adenosylmethionine:tRNA ribosyltransferase-isomerase, found in Clostridium perfringens (strain SM101 / Type A).